We begin with the raw amino-acid sequence, 220 residues long: Probable GTP-binding protein EngB (220 aa).

In terms of domain architecture, EngB-type G spans 23–199 (SVREVAFAGR…ERVLASWLDI (177 aa)). Mg(2+) is bound by residues Ser38 and Thr60.

It belongs to the TRAFAC class TrmE-Era-EngA-EngB-Septin-like GTPase superfamily. EngB GTPase family. The cofactor is Mg(2+).

Necessary for normal cell division and for the maintenance of normal septation. The chain is Probable GTP-binding protein EngB from Dechloromonas aromatica (strain RCB).